Here is a 424-residue protein sequence, read N- to C-terminus: Serine--tRNA ligase (424 aa).

230–232 contacts L-serine; the sequence is TAE. 261 to 263 serves as a coordination point for ATP; the sequence is RSE. Position 284 (E284) interacts with L-serine. Position 348–351 (348–351) interacts with ATP; the sequence is EISS. S384 contributes to the L-serine binding site.

The protein belongs to the class-II aminoacyl-tRNA synthetase family. Type-1 seryl-tRNA synthetase subfamily. In terms of assembly, homodimer. The tRNA molecule binds across the dimer.

The protein localises to the cytoplasm. The enzyme catalyses tRNA(Ser) + L-serine + ATP = L-seryl-tRNA(Ser) + AMP + diphosphate + H(+). The catalysed reaction is tRNA(Sec) + L-serine + ATP = L-seryl-tRNA(Sec) + AMP + diphosphate + H(+). Its pathway is aminoacyl-tRNA biosynthesis; selenocysteinyl-tRNA(Sec) biosynthesis; L-seryl-tRNA(Sec) from L-serine and tRNA(Sec): step 1/1. In terms of biological role, catalyzes the attachment of serine to tRNA(Ser). Is also able to aminoacylate tRNA(Sec) with serine, to form the misacylated tRNA L-seryl-tRNA(Sec), which will be further converted into selenocysteinyl-tRNA(Sec). In Streptococcus pneumoniae serotype 19F (strain G54), this protein is Serine--tRNA ligase.